A 351-amino-acid chain; its full sequence is Cytoplasmic dynein 2 light intermediate chain 1 (351 aa).

The disordered stretch occupies residues 304–351; it reads TLKDVKDPAKDPQYAESEVDEMRIQKDQELEQYKRSSSKSWKQIELDS. A compositionally biased stretch (basic and acidic residues) spans 323–337; that stretch reads DEMRIQKDQELEQYK.

This sequence belongs to the dynein light intermediate chain family. As to quaternary structure, light intermediate chain of the cytoplasmic dynein complex 2, a multisubunit complex composed at least of eleven different proteins. The cytoplasmic dynein 2 complex consists of two catalytic heavy chains (HCs) and a number of non-catalytic subunits presented by intermediate chains (ICs), light intermediate chains (LICs) and light chains (LCs). Among them, a heavy chain (DYNC2H1), two intermediate chains (DYNC2I2 and DYNC2I1), a light intermediate chain (DYNC2LI1), and a light chain (DYNLT2B) are unique to the dynein-2 complex, but a subset of light chains are also shared by dynein-1 and dynein-2 complexes. Dynein-2 complex is built around two copies of cytoplasmic dynein 2 heavy chain 1 (DYNC2H1). The C-terminal region forms the motor domain, which converts the energy from ATP hydrolysis into movement. Its N-terminal region forms the tail, an extended structure that binds the other subunits and holds the two heavy chains in a homodimer. Interacts with DYNC2H1 (via N-terminus); this interaction stabilizes the dynein-2 complex structure.

The protein localises to the cytoplasm. It localises to the cell projection. The protein resides in the cilium. Its subcellular location is the cytoskeleton. It is found in the cilium basal body. The protein localises to the cilium axoneme. It localises to the microtubule organizing center. The protein resides in the centrosome. Functionally, acts as one of several non-catalytic accessory components of the cytoplasmic dynein 2 complex (dynein-2 complex), a motor protein complex that drives the movement of cargos along microtubules within cilia and flagella in concert with the intraflagellar transport (IFT) system, facilitating the assembly of these organelles. Involved in the regulation of ciliary length. In Bos taurus (Bovine), this protein is Cytoplasmic dynein 2 light intermediate chain 1 (DYNC2LI1).